An 884-amino-acid chain; its full sequence is Probable LRR receptor-like serine/threonine-protein kinase PAM74 (884 aa).

Positions Met-1–Ala-23 are cleaved as a signal peptide. The Extracellular segment spans residues Gln-24–Pro-510. Asn-143, Asn-182, Asn-200, Asn-256, Asn-289, Asn-400, Asn-403, Asn-417, Asn-433, Asn-444, Asn-465, and Asn-470 each carry an N-linked (GlcNAc...) asparagine glycan. LRR repeat units follow at residues Arg-412 to Asn-433, His-436 to Gln-457, and Ser-460 to Arg-480. A helical transmembrane segment spans residues Val-511–Phe-531. At Val-532 to Arg-884 the chain is on the cytoplasmic side. Thr-570 carries the phosphothreonine modification. The Protein kinase domain occupies Asn-579–Leu-852. Residues Val-585 to Val-593 and Lys-607 contribute to the ATP site. Phosphotyrosine is present on Tyr-652. Asp-704 (proton acceptor) is an active-site residue. Ser-738 is subject to Phosphoserine. Phosphothreonine occurs at positions 739 and 744. Tyr-752 is modified (phosphotyrosine).

The protein belongs to the protein kinase superfamily. Ser/Thr protein kinase family. Binds to the ammonium transporter AMT1-1.

The protein localises to the membrane. The enzyme catalyses L-seryl-[protein] + ATP = O-phospho-L-seryl-[protein] + ADP + H(+). It catalyses the reaction L-threonyl-[protein] + ATP = O-phospho-L-threonyl-[protein] + ADP + H(+). Required for accurate photosynthesis. The chain is Probable LRR receptor-like serine/threonine-protein kinase PAM74 (PAM74) from Arabidopsis thaliana (Mouse-ear cress).